The chain runs to 117 residues: Nascent polypeptide-associated complex protein (117 aa).

Positions 9–77 constitute an NAC-A/B domain; sequence PKQLKQMQRA…ARERSLEAEM (69 aa).

The protein belongs to the NAC-alpha family. Homodimer. Interacts with the ribosome. Binds ribosomal RNA.

In terms of biological role, contacts the emerging nascent chain on the ribosome. The sequence is that of Nascent polypeptide-associated complex protein from Methanothermobacter thermautotrophicus (strain ATCC 29096 / DSM 1053 / JCM 10044 / NBRC 100330 / Delta H) (Methanobacterium thermoautotrophicum).